Consider the following 711-residue polypeptide: Polyribonucleotide nucleotidyltransferase (711 aa).

Mg(2+) is bound by residues D486 and D492. One can recognise a KH domain in the interval 553–612 (PRIHTIKINPDKIKDVIGKGGSVIRALTEETGTTIEIEDDGTVKIAATDGEKAKHAIRRI). One can recognise an S1 motif domain in the interval 622 to 690 (GRIYNGKVTR…RQGRVRLSIK (69 aa)). The disordered stretch occupies residues 690–711 (KEATEQSQPAAAPEAPAAEQGE). Over residues 694-711 (EQSQPAAAPEAPAAEQGE) the composition is skewed to low complexity.

This sequence belongs to the polyribonucleotide nucleotidyltransferase family. In terms of assembly, component of the RNA degradosome, which is a multiprotein complex involved in RNA processing and mRNA degradation. The cofactor is Mg(2+).

The protein localises to the cytoplasm. It carries out the reaction RNA(n+1) + phosphate = RNA(n) + a ribonucleoside 5'-diphosphate. Functionally, involved in mRNA degradation. Catalyzes the phosphorolysis of single-stranded polyribonucleotides processively in the 3'- to 5'-direction. This chain is Polyribonucleotide nucleotidyltransferase, found in Citrobacter koseri (strain ATCC BAA-895 / CDC 4225-83 / SGSC4696).